A 1128-amino-acid chain; its full sequence is Phytochrome A (1128 aa).

Residues 1–21 (MSSSRPTQCSSSSSRTRQSSR) show a composition bias toward low complexity. Positions 1 to 24 (MSSSRPTQCSSSSSRTRQSSRARI) are disordered. A GAF domain is found at 219–404 (SMEVLCNTVV…VFAVHVNKEF (186 aa)). Cysteine 324 lines the phytochromobilin pocket. PAS domains lie at 620 to 690 (VTSE…LQGK) and 750 to 834 (VEGD…LAGD). Residues 904-1124 (YMRHAINNPL…TFILSVELAS (221 aa)) form the Histidine kinase domain.

It belongs to the phytochrome family. As to quaternary structure, homodimer. In terms of processing, contains one covalently linked phytochromobilin chromophore.

Its function is as follows. Regulatory photoreceptor which exists in two forms that are reversibly interconvertible by light: the Pr form that absorbs maximally in the red region of the spectrum and the Pfr form that absorbs maximally in the far-red region. Photoconversion of Pr to Pfr induces an array of morphogenic responses, whereas reconversion of Pfr to Pr cancels the induction of those responses. Pfr controls the expression of a number of nuclear genes including those encoding the small subunit of ribulose-bisphosphate carboxylase, chlorophyll A/B binding protein, protochlorophyllide reductase, rRNA, etc. It also controls the expression of its own gene(s) in a negative feedback fashion. The polypeptide is Phytochrome A (PHYA) (Oryza sativa subsp. indica (Rice)).